The primary structure comprises 63 residues: Protein DsrB (63 aa).

The protein belongs to the DsrB family.

This chain is Protein DsrB, found in Yersinia enterocolitica serotype O:8 / biotype 1B (strain NCTC 13174 / 8081).